The sequence spans 197 residues: Probable GTP-binding protein EngB (197 aa).

In terms of domain architecture, EngB-type G spans 22–195 (GFPEIGLAGR…WQWIEAHTVG (174 aa)). GTP-binding positions include 30 to 37 (GRSNVGKS), 57 to 61 (GKTQT), 75 to 78 (DVPG), 142 to 145 (TKSD), and 174 to 176 (FSA). Mg(2+) contacts are provided by Ser37 and Thr59.

Belongs to the TRAFAC class TrmE-Era-EngA-EngB-Septin-like GTPase superfamily. EngB GTPase family. The cofactor is Mg(2+).

Its function is as follows. Necessary for normal cell division and for the maintenance of normal septation. The sequence is that of Probable GTP-binding protein EngB from Lactiplantibacillus plantarum (strain ATCC BAA-793 / NCIMB 8826 / WCFS1) (Lactobacillus plantarum).